Here is a 73-residue protein sequence, read N- to C-terminus: Translation initiation factor IF-1 1 (73 aa).

The S1-like domain occupies 1–72 (MAKEELIEFG…TKGRINFRHK (72 aa)).

It belongs to the IF-1 family. Component of the 30S ribosomal translation pre-initiation complex which assembles on the 30S ribosome in the order IF-2 and IF-3, IF-1 and N-formylmethionyl-tRNA(fMet); mRNA recruitment can occur at any time during PIC assembly.

Its subcellular location is the cytoplasm. Functionally, one of the essential components for the initiation of protein synthesis. Stabilizes the binding of IF-2 and IF-3 on the 30S subunit to which N-formylmethionyl-tRNA(fMet) subsequently binds. Helps modulate mRNA selection, yielding the 30S pre-initiation complex (PIC). Upon addition of the 50S ribosomal subunit IF-1, IF-2 and IF-3 are released leaving the mature 70S translation initiation complex. The protein is Translation initiation factor IF-1 1 of Cupriavidus pinatubonensis (strain JMP 134 / LMG 1197) (Cupriavidus necator (strain JMP 134)).